Consider the following 116-residue polypeptide: NADH-ubiquinone oxidoreductase chain 3 (116 aa).

3 helical membrane-spanning segments follow: residues 6–26 (FMLL…FWLA), 56–76 (FFLV…LLPL), and 85–105 (PLLT…GLVY).

The protein belongs to the complex I subunit 3 family.

Its subcellular location is the mitochondrion membrane. It catalyses the reaction a ubiquinone + NADH + 5 H(+)(in) = a ubiquinol + NAD(+) + 4 H(+)(out). Core subunit of the mitochondrial membrane respiratory chain NADH dehydrogenase (Complex I) that is believed to belong to the minimal assembly required for catalysis. Complex I functions in the transfer of electrons from NADH to the respiratory chain. The immediate electron acceptor for the enzyme is believed to be ubiquinone. This is NADH-ubiquinone oxidoreductase chain 3 (MT-ND3) from Struthio camelus (Common ostrich).